A 741-amino-acid polypeptide reads, in one-letter code: Subtilisin-like protease SBT4.4 (741 aa).

Positions 1-24 (MAKGTTFIFLFSSLLVLSLSSVSA) are cleaved as a signal peptide. Residues 25–112 (DKDDHGDQQV…VFPSRKLKLQ (88 aa)) constitute a propeptide, activation peptide. Positions 34-111 (VYIVYLGSLP…SVFPSRKLKL (78 aa)) constitute an Inhibitor I9 domain. The region spanning 116-589 (SWNFMGLKEG…SGHVDPIDAI (474 aa)) is the Peptidase S8 domain. D144 functions as the Charge relay system in the catalytic mechanism. N-linked (GlcNAc...) asparagine glycosylation is found at N175 and N195. H204 serves as the catalytic Charge relay system. N227 and N357 each carry an N-linked (GlcNAc...) asparagine glycan. Positions 359–445 (TNYPLVYGKS…LSNDDYKSLV (87 aa)) constitute a PA domain. N-linked (GlcNAc...) asparagine glycosylation occurs at N449. Residue S528 is the Charge relay system of the active site. N-linked (GlcNAc...) asparagine glycans are attached at residues N565, N610, N623, and N654.

It belongs to the peptidase S8 family. In terms of processing, the C-terminal propeptide is autocleaved.

It is found in the secreted. This is Subtilisin-like protease SBT4.4 from Arabidopsis thaliana (Mouse-ear cress).